The sequence spans 183 residues: Large ribosomal subunit protein eL18 (183 aa).

The segment at 151–183 (HFGPAPGAPRSHTKPYVRSKGHEQAKPSRRSNV) is disordered.

Belongs to the eukaryotic ribosomal protein eL18 family.

The protein localises to the cytoplasm. This chain is Large ribosomal subunit protein eL18 (RpL18), found in Plutella xylostella (Diamondback moth).